The chain runs to 379 residues: Cytochrome b (379 aa).

4 helical membrane passes run 33–53 (FGSL…FLAM), 77–98 (WLIR…YLHI), 113–133 (WNIG…GYVL), and 178–198 (FFAF…LHLL). Heme b-binding residues include His83 and His97. The heme b site is built by His182 and His196. His201 is an a ubiquinone binding site. A run of 4 helical transmembrane segments spans residues 226–246 (YKDL…ALFY), 288–308 (LGGV…PILH), 320–340 (ASQL…WIGG), and 347–367 (YIII…VLNP).

This sequence belongs to the cytochrome b family. The cytochrome bc1 complex contains 3 respiratory subunits (MT-CYB, CYC1 and UQCRFS1), 2 core proteins (UQCRC1 and UQCRC2) and probably 6 low-molecular weight proteins. The cofactor is heme b.

It localises to the mitochondrion inner membrane. Component of the ubiquinol-cytochrome c reductase complex (complex III or cytochrome b-c1 complex) that is part of the mitochondrial respiratory chain. The b-c1 complex mediates electron transfer from ubiquinol to cytochrome c. Contributes to the generation of a proton gradient across the mitochondrial membrane that is then used for ATP synthesis. The sequence is that of Cytochrome b (mt-cyb) from Anguilla rostrata (American eel).